The sequence spans 429 residues: Small ribosomal subunit protein uS5m (429 aa).

The tract at residues 108–127 (AGAKKGRGKRTKKKKRKDLN) is disordered. Over residues 111–125 (KKGRGKRTKKKKRKD) the composition is skewed to basic residues. Residues 218–282 (FDTRILEVRN…NRAVHHLYYI (65 aa)) form the S5 DRBM domain.

It belongs to the universal ribosomal protein uS5 family. In terms of assembly, component of the mitochondrial ribosome small subunit (28S) which comprises a 12S rRNA and about 30 distinct proteins.

Its subcellular location is the mitochondrion. This is Small ribosomal subunit protein uS5m (MRPS5) from Pongo abelii (Sumatran orangutan).